Reading from the N-terminus, the 213-residue chain is Probable transaldolase (213 aa).

Residue Lys-83 is the Schiff-base intermediate with substrate of the active site.

Belongs to the transaldolase family. Type 3B subfamily.

It localises to the cytoplasm. It catalyses the reaction D-sedoheptulose 7-phosphate + D-glyceraldehyde 3-phosphate = D-erythrose 4-phosphate + beta-D-fructose 6-phosphate. It participates in carbohydrate degradation; pentose phosphate pathway; D-glyceraldehyde 3-phosphate and beta-D-fructose 6-phosphate from D-ribose 5-phosphate and D-xylulose 5-phosphate (non-oxidative stage): step 2/3. Functionally, transaldolase is important for the balance of metabolites in the pentose-phosphate pathway. The sequence is that of Probable transaldolase from Geobacillus kaustophilus (strain HTA426).